The sequence spans 1713 residues: Serine/threonine-protein kinase MRCK beta (1713 aa).

The region spanning F76–F342 is the Protein kinase domain. ATP is bound by residues I82–V90 and K105. Catalysis depends on D200, which acts as the Proton acceptor. Residues S221 and S233 each carry the phosphoserine; by autocatalysis modification. T239 is modified (phosphothreonine; by autocatalysis). Residues E343–G413 enclose the AGC-kinase C-terminal domain. T423 carries the phosphothreonine modification. Residues L434–H649 adopt a coiled-coil conformation. R671 carries the omega-N-methylarginine modification. 2 coiled-coil regions span residues Q681–E815 and E878–D939. S927 is modified (phosphoserine). At Y954 the chain carries Phosphotyrosine. Polar residues predominate over residues A971–E994. The interval A971–P1022 is disordered. The Phorbol-ester/DAG-type zinc finger occupies A1026–C1076. Positions G1096 to A1215 constitute a PH domain. Residues I1241 to N1515 form the CNH domain. The CRIB domain maps to I1585–G1598. The tract at residues T1616–A1713 is disordered. The span at D1666–K1677 shows a compositional bias: basic and acidic residues. Phosphoserine occurs at positions 1682, 1684, 1688, 1692, and 1695.

The protein belongs to the protein kinase superfamily. AGC Ser/Thr protein kinase family. DMPK subfamily. In terms of assembly, homodimer and homotetramer via the coiled coil regions. Interacts tightly with GTP-bound but not GDP-bound CDC42. Interacts with TJP1; this interaction requires the presence of catalytically active CDC42. Forms a tripartite complex with MYO18A and LURAP1 with the latter acting as an adapter connecting CDC42BPB and MYO18A. LURAP1 binding results in activation of CDC42BPB by abolition of its negative autoregulation. Interacts with STRIP1, STRN3 and SIKE1. Interacts with CPNE4 (via VWFA domain). Interacts with LURAP1. Interacts (via AGC-kinase C-terminal domain) with FAM89B/LRAP25 (via LRR repeat). Forms a tripartite complex with FAM89B/LRAP25 and LIMK1. Mg(2+) serves as cofactor. Post-translationally, proteolytically cleaved by caspases upon apoptosis induction.

The protein localises to the cytoplasm. It is found in the cell membrane. The protein resides in the cell junction. Its subcellular location is the cell projection. It localises to the lamellipodium. The catalysed reaction is L-seryl-[protein] + ATP = O-phospho-L-seryl-[protein] + ADP + H(+). It carries out the reaction L-threonyl-[protein] + ATP = O-phospho-L-threonyl-[protein] + ADP + H(+). Maintained in an inactive, closed conformation by an interaction between the kinase domain and the negative autoregulatory C-terminal coiled-coil region. Agonist binding to the phorbol ester binding site disrupts this, releasing the kinase domain to allow N-terminus-mediated dimerization and kinase activation by transautophosphorylation. Inhibited by chelerythrine chloride. Its function is as follows. Serine/threonine-protein kinase which is an important downstream effector of CDC42 and plays a role in the regulation of cytoskeleton reorganization and cell migration. Regulates actin cytoskeletal reorganization via phosphorylation of PPP1R12C and MYL9/MLC2. In concert with MYO18A and LURAP1, is involved in modulating lamellar actomyosin retrograde flow that is crucial to cell protrusion and migration. Phosphorylates PPP1R12A. In concert with FAM89B/LRAP25 mediates the targeting of LIMK1 to the lamellipodium resulting in its activation and subsequent phosphorylation of CFL1 which is important for lamellipodial F-actin regulation. The sequence is that of Serine/threonine-protein kinase MRCK beta from Mus musculus (Mouse).